The primary structure comprises 109 residues: UPF0060 membrane protein HEAR0108 (109 aa).

4 helical membrane passes run 7–27 (VALFVVTAIAEIVGCYLPYLW), 33–53 (SIWLLLPAALSLALFAWLLSL), 63–83 (AAYGGIYVAVALGWLWLVDGI), and 87–107 (NWDVAGVVFTFIGMGIIMFAP).

The protein belongs to the UPF0060 family.

The protein localises to the cell inner membrane. This chain is UPF0060 membrane protein HEAR0108, found in Herminiimonas arsenicoxydans.